The sequence spans 587 residues: MKRKTKIVCTIGPASESVDKLVQLMEAGMNVARLNFSHGDHEEHGRRIANIREAAKRTGRTVAILLDTKGPEIRTHNMENGAIELKEGSKLVISMSEVLGTPEKISVTYPSLIDDVSVGAKILLDDGLISLEVNAVDKQAGEIVTTVLNGGVLKNKKGVNVPGVKVNLPGITEKDRADILFGIRQGIDFIAASFVRRASDVLEIRELLEAHDALHIQIIAKIENEEGVANIDEILEAADGLMVARGDLGVEIPAEEVPLIQKLLIKKCNMLGKPVITATQMLDSMQRNPRPTRAEASDVANAIFDGTDAVMLSGETAAGQYPVEAVKTMHQIALRTEQALEHRDILSQRTKESQTTITDAIGQSVAHTALNLDVAAIVTPTVSGKTPQMVAKYRPKAPIIAVTSNEAVSRRLALVWGVYTKEAPHVNTTDEMLDVAVDAAVRSGLVKHGDLVVITAGVPVGETGSTNLMKVHVISDLLAKGQGIGRKSAFGKAVVAKTAEEARQKMVDGGILVTVSTDADMMPAIEKAAAIITEEGGLTSHAAVVGLSLGIPVIVGVENATTLFKDGQEITVDGGFGAVYRGHASVL.

R33 contributes to the substrate binding site. N35, S37, D67, and T68 together coordinate K(+). 35–38 (NFSH) contributes to the ATP binding site. Residues R74 and K157 each coordinate ATP. K221 lines the substrate pocket. Mg(2+) is bound at residue E223. Positions 246, 247, and 279 each coordinate substrate. D247 contributes to the Mg(2+) binding site.

This sequence belongs to the pyruvate kinase family. In the C-terminal section; belongs to the PEP-utilizing enzyme family. As to quaternary structure, homotetramer. Requires Mg(2+) as cofactor. It depends on K(+) as a cofactor. Post-translationally, the N-terminus is blocked.

It carries out the reaction pyruvate + ATP = phosphoenolpyruvate + ADP + H(+). It participates in carbohydrate degradation; glycolysis; pyruvate from D-glyceraldehyde 3-phosphate: step 5/5. With respect to regulation, exhibits homotropic positive cooperativity for PEP. Allosterically activated by ribose-5-phosphate, AMP and other nucleoside monophosphates but not by fructose-1,6-bisphosphate. Its function is as follows. Catalyzes the phosphoryl transfer from phosphoenolpyruvate (PEP) to ADP to form pyruvate and ATP. Has a broad specificity for nucleoside diphosphates and can use ADP, GDP, IDP and UDP. In Geobacillus stearothermophilus (Bacillus stearothermophilus), this protein is Pyruvate kinase (pyk).